A 316-amino-acid polypeptide reads, in one-letter code: Ribosomal RNA small subunit methyltransferase H (316 aa).

S-adenosyl-L-methionine is bound by residues 35 to 37 (SGH), Asp-55, Phe-84, Asp-105, and Gln-112.

It belongs to the methyltransferase superfamily. RsmH family.

It is found in the cytoplasm. The enzyme catalyses cytidine(1402) in 16S rRNA + S-adenosyl-L-methionine = N(4)-methylcytidine(1402) in 16S rRNA + S-adenosyl-L-homocysteine + H(+). Specifically methylates the N4 position of cytidine in position 1402 (C1402) of 16S rRNA. This Streptococcus pyogenes serotype M6 (strain ATCC BAA-946 / MGAS10394) protein is Ribosomal RNA small subunit methyltransferase H.